We begin with the raw amino-acid sequence, 254 residues long: Protein Thf1 (254 aa).

A coiled-coil region spans residues 183–217 (SDKLQKDLDLYRSNLEKMEQARITMEEAIQADRRK). Residues 213-227 (ADRRKREQREQEKLA) are compositionally biased toward basic and acidic residues. Residues 213-254 (ADRRKREQREQEKLAKAAAAEAPAALEASSDNPEPETSETPS) form a disordered region. A compositionally biased stretch (low complexity) spans 228-240 (KAAAAEAPAALEA). The segment covering 245-254 (PEPETSETPS) has biased composition (acidic residues).

Belongs to the THF1 family.

Functionally, may be involved in photosynthetic membrane biogenesis. This Synechococcus elongatus (strain ATCC 33912 / PCC 7942 / FACHB-805) (Anacystis nidulans R2) protein is Protein Thf1.